The primary structure comprises 108 residues: ATP-dependent Clp protease adapter protein ClpS (108 aa).

It belongs to the ClpS family. Binds to the N-terminal domain of the chaperone ClpA.

Functionally, involved in the modulation of the specificity of the ClpAP-mediated ATP-dependent protein degradation. The polypeptide is ATP-dependent Clp protease adapter protein ClpS (Ralstonia pickettii (strain 12J)).